The following is a 385-amino-acid chain: UPF0496 protein At3g28290 (385 aa).

Residues 138-214 (KDKENDVGKK…IEMEISSRKK (77 aa)) adopt a coiled-coil conformation. Transmembrane regions (helical) follow at residues 217–237 (IISN…SMVL) and 242–262 (VGAG…IGWV). Positions 267-294 (ILENKIQAREKQEEALKKAHRIANEMDK) form a coiled coil.

Belongs to the UPF0496 family. In terms of tissue distribution, widely expressed.

Its subcellular location is the membrane. This chain is UPF0496 protein At3g28290, found in Arabidopsis thaliana (Mouse-ear cress).